The following is a 189-amino-acid chain: Ion-translocating oxidoreductase complex subunit B (189 aa).

A hydrophobic region spans residues 1–26 (MSGIFIAIILLTILALLFGILLGFAA). The 59-residue stretch at 32–90 (EGDPLVDQLEALLPQTQCGQCGYPGCRPYAEAIANGEKINLCPPGGSATMEKLAEMAGV) folds into the 4Fe-4S domain. Cysteine 49, cysteine 52, cysteine 57, cysteine 73, cysteine 114, cysteine 117, cysteine 120, cysteine 124, cysteine 144, cysteine 147, cysteine 150, and cysteine 154 together coordinate [4Fe-4S] cluster. 4Fe-4S ferredoxin-type domains lie at 105–134 (KVAYIREEECIGCTKCIQACPVDAILGSGK) and 135–164 (LMHTVITDYCTGCDLCVAPCPVDCIDMLPV).

The protein belongs to the 4Fe4S bacterial-type ferredoxin family. RnfB subfamily. As to quaternary structure, the complex is composed of six subunits: RnfA, RnfB, RnfC, RnfD, RnfE and RnfG. It depends on [4Fe-4S] cluster as a cofactor.

It is found in the cell inner membrane. In terms of biological role, part of a membrane-bound complex that couples electron transfer with translocation of ions across the membrane. The sequence is that of Ion-translocating oxidoreductase complex subunit B from Shewanella sediminis (strain HAW-EB3).